The following is a 238-amino-acid chain: Heme oxygenase 1 (238 aa).

This sequence belongs to the heme oxygenase family.

It catalyses the reaction heme b + 3 reduced [NADPH--hemoprotein reductase] + 3 O2 = biliverdin IXalpha + CO + Fe(2+) + 3 oxidized [NADPH--hemoprotein reductase] + 3 H2O + H(+). Functionally, catalyzes the opening of the heme ring with the release of iron. Key enzyme in the synthesis of the chromophoric part of the photosynthetic antennae. Upon overexpression in E.coli with PCB:ferredoxin oxidoreductase, CpeS and either CpcB or PecB permits synthesis of phycocyanin-coupled CpcB or PecB. This chain is Heme oxygenase 1 (pbsA1), found in Nostoc sp. (strain PCC 7120 / SAG 25.82 / UTEX 2576).